The primary structure comprises 212 residues: uncharacterized protein (212 aa).

Positions 53, 74, and 97 each coordinate S-adenosyl-L-methionine.

It belongs to the methyltransferase superfamily. YrrT family.

Its function is as follows. Could be a S-adenosyl-L-methionine-dependent methyltransferase. This is an uncharacterized protein from Bacillus cytotoxicus (strain DSM 22905 / CIP 110041 / 391-98 / NVH 391-98).